Consider the following 675-residue polypeptide: Zinc finger CCCH domain-containing protein 65 (675 aa).

Residues 294–320 (TFSNEAKMDPGTSIKKRSAPSKDAKAR) form a disordered region. The segment covering 307–320 (IKKRSAPSKDAKAR) has biased composition (basic residues). The stretch at 314–342 (SKDAKARKRAKARIKRAQERIALGVKKLK) forms a coiled coil. 3 C3H1-type zinc fingers span residues 350–377 (PKPI…HDTI), 384–406 (PCCY…HDLS), and 409–432 (PCNN…HKGT). Disordered regions lie at residues 487–572 (LKPS…LPLG) and 586–612 (EQKT…SHIQ). Residues 490-504 (SSHSNQRNSSDASSS) show a composition bias toward low complexity. Polar residues predominate over residues 543-567 (KASSASKPNTDNSDSQTLKQSQQGS). Positions 586–595 (EQKTLNREPQ) are enriched in basic and acidic residues. Residues 597–612 (PASSKNLKTTPSSHIQ) show a composition bias toward polar residues.

In terms of biological role, possesses RNA-binding and ribonuclease activities in vitro. The protein is Zinc finger CCCH domain-containing protein 65 (EMB1789) of Arabidopsis thaliana (Mouse-ear cress).